Reading from the N-terminus, the 293-residue chain is 4-hydroxy-tetrahydrodipicolinate synthase (293 aa).

Ser45 contributes to the pyruvate binding site. The Proton donor/acceptor role is filled by Tyr133. Lys161 (schiff-base intermediate with substrate) is an active-site residue. Residue Ile203 coordinates pyruvate.

It belongs to the DapA family. Homotetramer; dimer of dimers.

Its subcellular location is the cytoplasm. The catalysed reaction is L-aspartate 4-semialdehyde + pyruvate = (2S,4S)-4-hydroxy-2,3,4,5-tetrahydrodipicolinate + H2O + H(+). It participates in amino-acid biosynthesis; L-lysine biosynthesis via DAP pathway; (S)-tetrahydrodipicolinate from L-aspartate: step 3/4. In terms of biological role, catalyzes the condensation of (S)-aspartate-beta-semialdehyde [(S)-ASA] and pyruvate to 4-hydroxy-tetrahydrodipicolinate (HTPA). This is 4-hydroxy-tetrahydrodipicolinate synthase from Psychromonas ingrahamii (strain DSM 17664 / CCUG 51855 / 37).